The sequence spans 131 residues: Small ribosomal subunit protein uS8 (131 aa).

The segment at 1-27 (MSMTDPVADMLTRIRNGQRASKNEVSM) is disordered.

Belongs to the universal ribosomal protein uS8 family. In terms of assembly, part of the 30S ribosomal subunit. Contacts proteins S5 and S12.

Functionally, one of the primary rRNA binding proteins, it binds directly to 16S rRNA central domain where it helps coordinate assembly of the platform of the 30S subunit. The sequence is that of Small ribosomal subunit protein uS8 from Thioalkalivibrio sulfidiphilus (strain HL-EbGR7).